The chain runs to 847 residues: Nitrite reductase (NADH) large subunit (847 aa).

Position 44 to 79 (44 to 79 (YDRVHLSSYFSHHTAEELSLVREGFYEKHGIKVLVG)) interacts with FAD. 193–225 (LRRKIESMGVRVHTSKNTLEIVQEGVEARKTMR) contacts NAD(+). [2Fe-2S] cluster is bound by residues Cys-425, Cys-427, Cys-459, and Cys-462. 4 residues coordinate [4Fe-4S] cluster: Cys-641, Cys-647, Cys-681, and Cys-685. Cys-685 is a siroheme binding site.

It belongs to the nitrite and sulfite reductase 4Fe-4S domain family. Homodimer which associates with NirD. It depends on siroheme as a cofactor. Requires [2Fe-2S] cluster as cofactor. The cofactor is [4Fe-4S] cluster. FAD serves as cofactor.

The enzyme catalyses NH4(+) + 3 NAD(+) + 2 H2O = nitrite + 3 NADH + 5 H(+). It functions in the pathway nitrogen metabolism; nitrate reduction (assimilation). The chain is Nitrite reductase (NADH) large subunit (nirB) from Escherichia coli (strain K12).